The following is a 129-amino-acid chain: Large ribosomal subunit protein uL22 (129 aa).

This sequence belongs to the universal ribosomal protein uL22 family. Part of the 50S ribosomal subunit.

Functionally, this protein binds specifically to 23S rRNA; its binding is stimulated by other ribosomal proteins, e.g. L4, L17, and L20. It is important during the early stages of 50S assembly. It makes multiple contacts with different domains of the 23S rRNA in the assembled 50S subunit and ribosome. The globular domain of the protein is located near the polypeptide exit tunnel on the outside of the subunit, while an extended beta-hairpin is found that lines the wall of the exit tunnel in the center of the 70S ribosome. This is Large ribosomal subunit protein uL22 from Sinorhizobium medicae (strain WSM419) (Ensifer medicae).